The primary structure comprises 274 residues: Large ribosomal subunit protein uL2 (274 aa).

Disordered stretches follow at residues 28–55 (APHA…RHVG) and 224–274 (VAMN…RRRK).

The protein belongs to the universal ribosomal protein uL2 family. Part of the 50S ribosomal subunit. Forms a bridge to the 30S subunit in the 70S ribosome.

One of the primary rRNA binding proteins. Required for association of the 30S and 50S subunits to form the 70S ribosome, for tRNA binding and peptide bond formation. It has been suggested to have peptidyltransferase activity; this is somewhat controversial. Makes several contacts with the 16S rRNA in the 70S ribosome. The protein is Large ribosomal subunit protein uL2 of Pseudomonas putida (strain ATCC 47054 / DSM 6125 / CFBP 8728 / NCIMB 11950 / KT2440).